The primary structure comprises 130 residues: Small ribosomal subunit protein uS9 (130 aa).

It belongs to the universal ribosomal protein uS9 family.

This chain is Small ribosomal subunit protein uS9, found in Hydrogenovibrio crunogenus (strain DSM 25203 / XCL-2) (Thiomicrospira crunogena).